The chain runs to 156 residues: Ribosomal RNA large subunit methyltransferase H (156 aa).

S-adenosyl-L-methionine-binding positions include Leu73, Gly104, and 123–128 (LSPLTL).

This sequence belongs to the RNA methyltransferase RlmH family. As to quaternary structure, homodimer.

It is found in the cytoplasm. It catalyses the reaction pseudouridine(1915) in 23S rRNA + S-adenosyl-L-methionine = N(3)-methylpseudouridine(1915) in 23S rRNA + S-adenosyl-L-homocysteine + H(+). Specifically methylates the pseudouridine at position 1915 (m3Psi1915) in 23S rRNA. This Hahella chejuensis (strain KCTC 2396) protein is Ribosomal RNA large subunit methyltransferase H.